A 418-amino-acid chain; its full sequence is Vacuole membrane protein HFL1 (418 aa).

The Extracellular segment spans residues 1–5; sequence MENKL. The helical transmembrane segment at 6–26 threads the bilayer; sequence LCWWLYWPCVYSSIIATIISF. The Cytoplasmic segment spans residues 27-43; sequence YTITRHLLNYRKPYEQR. Residues 44-64 traverse the membrane as a helical segment; sequence LSIRILLLVPIFSVSCASGII. The Extracellular portion of the chain corresponds to 65 to 78; the sequence is KPEAAQFYVDPIRE. A helical membrane pass occupies residues 79–99; the sequence is FYEAFVIYTFFTFLTLLLGGE. Over 100 to 141 the chain is Cytoplasmic; the sequence is RNIITVLSLNHAPTRHPIPLIGKICKPIDLSDPFDFLFVKKG. Residues 142-162 traverse the membrane as a helical segment; sequence ILQYVWFKPFYCFGTLICSAW. Over 163–168 the chain is Extracellular; the sequence is KLPKFE. The helical transmembrane segment at 169–189 threads the bilayer; the sequence is IFLNVFYNISVTWSLYSLALF. Residues 190–205 are Cytoplasmic-facing; the sequence is WKCLYPELTPYKPWLK. The chain crosses the membrane as a helical span at residues 206-226; that stretch reads FLCVKLIIFASYWQSIIIQGL. The Extracellular portion of the chain corresponds to 227–246; that stretch reads VVTGKLGTGNQDRTSGYVYK. A helical transmembrane segment spans residues 247–267; sequence NGLLCIEMVPFAILHAVAFPW. Topologically, residues 268–418 are cytoplasmic; sequence NKYTAFSIPY…DVQSRSSMAC (151 aa). Residues 379–402 are ATG8-interacting region; sequence RTFPEDPNYPVVHDYTMGHRYSRS.

This sequence belongs to the TMEM184 family. As to quaternary structure, interacts with ATG8.

The protein localises to the vacuole membrane. In terms of biological role, vacuole membrane protein that recruits ATG8 to facilitate the degradation of vacuolar integral membrane proteins during early-stationary vacuole turnover (EVT) when cells enter stationary phase. This Saccharomyces cerevisiae (strain ATCC 204508 / S288c) (Baker's yeast) protein is Vacuole membrane protein HFL1.